Consider the following 1384-residue polypeptide: Sterol 3-beta-glucosyltransferase (1384 aa).

Disordered stretches follow at residues 1-64 (MPNM…DGQL), 86-189 (ARFD…TPRA), and 204-229 (DKKQSADQPSSSTKGETDGTSEQSCA). The span at 7 to 19 (LLEDAKRRVDRRL) shows a compositional bias: basic and acidic residues. A compositionally biased stretch (low complexity) spans 21–36 (ASRQSISSSRIFSSAF). Residues 38–47 (DRLKDDHDAQ) are compositionally biased toward basic and acidic residues. Over residues 146 to 156 (LRSLKPSPKSS) the composition is skewed to low complexity. Positions 158–172 (GTETTVQTEPPTSDE) are enriched in polar residues. Low complexity predominate over residues 174–189 (SPLASPRRARSATPRA). Polar residues predominate over residues 209–229 (ADQPSSSTKGETDGTSEQSCA). The 48-residue stretch at 237-284 (KEMFGFEMPEKVLMEYACSLLQNILLQGYMYVTEGHICFYAYLPRKSA) folds into the GRAM 1 domain. A PH domain is found at 285-384 (VTIRSGYLHK…WVKALQKVIF (100 aa)). 2 disordered regions span residues 457–526 (MKTS…RQRD) and 560–629 (NRSD…VNSS). Polar residues-rich tracts occupy residues 458–473 (KTSQLLPPPSEQTSPA), 483–494 (WSLNSDLSQSRG), and 560–572 (NRSDVFQSPTIHT). A compositionally biased stretch (basic and acidic residues) spans 578–588 (PSGDRTGRRLS). The segment covering 604-629 (RNGQEMQYASSDSDQGTQHPSKVNSS) has biased composition (polar residues). The GRAM 2 domain maps to 714-817 (RFRAHFALPS…RDDCAVTVHQ (104 aa)). 10 residues coordinate UDP-alpha-D-glucose: Ser901, Arg902, Asp904, Ala1204, His1206, His1219, Gly1223, Thr1224, Asp1243, and Gln1244. The segment covering 1322 to 1336 (VSSTPFSPTPSAKTT) has biased composition (polar residues). The interval 1322-1350 (VSSTPFSPTPSAKTTAEQEEDDVDDSEEW) is disordered. A compositionally biased stretch (acidic residues) spans 1338–1350 (EQEEDDVDDSEEW).

The protein belongs to the glycosyltransferase 28 family.

The protein localises to the cytoplasm. It localises to the preautophagosomal structure membrane. The enzyme catalyses a sterol + UDP-alpha-D-glucose = a sterol 3-beta-D-glucoside + UDP + H(+). It catalyses the reaction ergosterol + UDP-alpha-D-glucose = ergosteryl 3-beta-D-glucoside + UDP + H(+). Its function is as follows. Sterol glycosyltransferase responsible for the glycosylation of ergosterol to form ergosterol-glucoside. Involved in cytoplasm to vacuole transport (Cvt), pexophagy or nonselective autophagy. The sequence is that of Sterol 3-beta-glucosyltransferase from Aspergillus oryzae (strain ATCC 42149 / RIB 40) (Yellow koji mold).